A 154-amino-acid polypeptide reads, in one-letter code: 6,7-dimethyl-8-ribityllumazine synthase (154 aa).

Residues F26, 60-62 (ALE), and 84-86 (CII) each bind 5-amino-6-(D-ribitylamino)uracil. 89–90 (ET) contacts (2S)-2-hydroxy-3-oxobutyl phosphate. H92 functions as the Proton donor in the catalytic mechanism. N117 is a binding site for 5-amino-6-(D-ribitylamino)uracil. Residue R131 coordinates (2S)-2-hydroxy-3-oxobutyl phosphate.

The protein belongs to the DMRL synthase family.

The catalysed reaction is (2S)-2-hydroxy-3-oxobutyl phosphate + 5-amino-6-(D-ribitylamino)uracil = 6,7-dimethyl-8-(1-D-ribityl)lumazine + phosphate + 2 H2O + H(+). It participates in cofactor biosynthesis; riboflavin biosynthesis; riboflavin from 2-hydroxy-3-oxobutyl phosphate and 5-amino-6-(D-ribitylamino)uracil: step 1/2. Functionally, catalyzes the formation of 6,7-dimethyl-8-ribityllumazine by condensation of 5-amino-6-(D-ribitylamino)uracil with 3,4-dihydroxy-2-butanone 4-phosphate. This is the penultimate step in the biosynthesis of riboflavin. This chain is 6,7-dimethyl-8-ribityllumazine synthase, found in Acidovorax ebreus (strain TPSY) (Diaphorobacter sp. (strain TPSY)).